A 413-amino-acid chain; its full sequence is Serine hydroxymethyltransferase (413 aa).

(6S)-5,6,7,8-tetrahydrofolate-binding positions include L117 and 121–123 (GHL). K226 bears the N6-(pyridoxal phosphate)lysine mark. Residues E239 and 349–351 (SPF) each bind (6S)-5,6,7,8-tetrahydrofolate.

Belongs to the SHMT family. Homodimer. Pyridoxal 5'-phosphate is required as a cofactor.

The protein resides in the cytoplasm. The enzyme catalyses (6R)-5,10-methylene-5,6,7,8-tetrahydrofolate + glycine + H2O = (6S)-5,6,7,8-tetrahydrofolate + L-serine. It participates in one-carbon metabolism; tetrahydrofolate interconversion. The protein operates within amino-acid biosynthesis; glycine biosynthesis; glycine from L-serine: step 1/1. Its function is as follows. Catalyzes the reversible interconversion of serine and glycine with tetrahydrofolate (THF) serving as the one-carbon carrier. This reaction serves as the major source of one-carbon groups required for the biosynthesis of purines, thymidylate, methionine, and other important biomolecules. Also exhibits THF-independent aldolase activity toward beta-hydroxyamino acids, producing glycine and aldehydes, via a retro-aldol mechanism. The polypeptide is Serine hydroxymethyltransferase (Bacillus cereus (strain ATCC 10987 / NRS 248)).